We begin with the raw amino-acid sequence, 659 residues long: DNA mismatch repair protein MutL (659 aa).

Positions 338–459 are disordered; it reads GAPRGASKPG…DTTSERDSLP (122 aa). The span at 352-362 shows a compositional bias: basic and acidic residues; it reads SPEHSPTDRDA. Residues 374–391 are compositionally biased toward polar residues; it reads SDGNGQRTAASGATSESP.

This sequence belongs to the DNA mismatch repair MutL/HexB family.

In terms of biological role, this protein is involved in the repair of mismatches in DNA. It is required for dam-dependent methyl-directed DNA mismatch repair. May act as a 'molecular matchmaker', a protein that promotes the formation of a stable complex between two or more DNA-binding proteins in an ATP-dependent manner without itself being part of a final effector complex. The sequence is that of DNA mismatch repair protein MutL from Halobacterium salinarum (strain ATCC 29341 / DSM 671 / R1).